A 458-amino-acid polypeptide reads, in one-letter code: Monomethylamine methyltransferase MtmB1 (458 aa).

A non-standard amino acid (pyrrolysine) is located at residue O202.

It belongs to the monomethylamine methyltransferase family. As to quaternary structure, dimer of homotrimers. Can form a complex with MtmC (MtmC1 or MtmC2).

The enzyme catalyses Co(I)-[methylamine-specific corrinoid protein] + methylamine + H(+) = methyl-Co(III)-[methylamine-specific corrinoid protein] + NH4(+). Its pathway is one-carbon metabolism; methanogenesis from methylamine. Catalyzes the transfer of the methyl group from monomethylamine to the corrinoid cofactor of MtmC (MtmC1 or MtmC2). The polypeptide is Monomethylamine methyltransferase MtmB1 (mtmB1) (Methanosarcina barkeri).